The chain runs to 285 residues: Probable endonuclease 4 (285 aa).

Residues His-69, His-109, Glu-145, Asp-179, His-182, His-216, Asp-229, His-231, and Glu-261 each coordinate Zn(2+).

It belongs to the AP endonuclease 2 family. Requires Zn(2+) as cofactor.

The catalysed reaction is Endonucleolytic cleavage to 5'-phosphooligonucleotide end-products.. Its function is as follows. Endonuclease IV plays a role in DNA repair. It cleaves phosphodiester bonds at apurinic or apyrimidinic (AP) sites, generating a 3'-hydroxyl group and a 5'-terminal sugar phosphate. In Salmonella typhi, this protein is Probable endonuclease 4.